The sequence spans 283 residues: Large ribosomal subunit protein uL4 (283 aa).

This sequence belongs to the universal ribosomal protein uL4 family. Part of the 50S ribosomal subunit.

One of the primary rRNA binding proteins, this protein initially binds near the 5'-end of the 23S rRNA. It is important during the early stages of 50S assembly. It makes multiple contacts with different domains of the 23S rRNA in the assembled 50S subunit and ribosome. In terms of biological role, forms part of the polypeptide exit tunnel. The protein is Large ribosomal subunit protein uL4 of Pyrobaculum aerophilum (strain ATCC 51768 / DSM 7523 / JCM 9630 / CIP 104966 / NBRC 100827 / IM2).